Consider the following 489-residue polypeptide: NAC domain-containing protein 74 (489 aa).

The region spanning Leu-9 to Arg-159 is the NAC domain. The DNA-binding element occupies Ile-108–Gly-165. Over residues Lys-413–Ala-427 the composition is skewed to basic and acidic residues. A disordered region spans residues Lys-413–Ser-435. A helical transmembrane segment spans residues Trp-456–Gly-476.

As to expression, widely expressed.

It localises to the nucleus. The protein resides in the cell membrane. Transcription activator involved in heat and endoplasmic reticulum (ER) stress responses. Regulates the expression of genes involved in ER protein folding and heat stress-responsive genes. Binds directly to the promoter of BZIP74 and regulates its expression in response to heat stress. This is NAC domain-containing protein 74 from Oryza sativa subsp. japonica (Rice).